The primary structure comprises 340 residues: Glyceraldehyde-3-phosphate dehydrogenase, cytosolic (340 aa).

NAD(+) contacts are provided by residues 16 to 17 (RI), Asp38, and Arg85. Residues 156-158 (SCT), Thr187, 216-217 (TG), and Arg239 each bind D-glyceraldehyde 3-phosphate. The active-site Nucleophile is Cys157. Residue Asn321 coordinates NAD(+).

It belongs to the glyceraldehyde-3-phosphate dehydrogenase family. As to quaternary structure, homotetramer.

The protein resides in the cytoplasm. It carries out the reaction D-glyceraldehyde 3-phosphate + phosphate + NAD(+) = (2R)-3-phospho-glyceroyl phosphate + NADH + H(+). It participates in carbohydrate degradation; glycolysis; pyruvate from D-glyceraldehyde 3-phosphate: step 1/5. In terms of biological role, key enzyme in glycolysis that catalyzes the first step of the pathway by converting D-glyceraldehyde 3-phosphate (G3P) into 3-phospho-D-glyceroyl phosphate. Essential for the maintenance of cellular ATP levels and carbohydrate metabolism. In Taxus baccata (English yew), this protein is Glyceraldehyde-3-phosphate dehydrogenase, cytosolic.